We begin with the raw amino-acid sequence, 207 residues long: Thiamine-phosphate synthase (207 aa).

4-amino-2-methyl-5-(diphosphooxymethyl)pyrimidine is bound by residues 35–39 (QYRDK) and N67. 2 residues coordinate Mg(2+): D68 and D86. T105 serves as a coordination point for 4-amino-2-methyl-5-(diphosphooxymethyl)pyrimidine. 132 to 134 (SVT) is a binding site for 2-[(2R,5Z)-2-carboxy-4-methylthiazol-5(2H)-ylidene]ethyl phosphate. Residue K135 participates in 4-amino-2-methyl-5-(diphosphooxymethyl)pyrimidine binding. Position 162 (G162) interacts with 2-[(2R,5Z)-2-carboxy-4-methylthiazol-5(2H)-ylidene]ethyl phosphate.

Belongs to the thiamine-phosphate synthase family. Mg(2+) serves as cofactor.

It carries out the reaction 2-[(2R,5Z)-2-carboxy-4-methylthiazol-5(2H)-ylidene]ethyl phosphate + 4-amino-2-methyl-5-(diphosphooxymethyl)pyrimidine + 2 H(+) = thiamine phosphate + CO2 + diphosphate. The enzyme catalyses 2-(2-carboxy-4-methylthiazol-5-yl)ethyl phosphate + 4-amino-2-methyl-5-(diphosphooxymethyl)pyrimidine + 2 H(+) = thiamine phosphate + CO2 + diphosphate. The catalysed reaction is 4-methyl-5-(2-phosphooxyethyl)-thiazole + 4-amino-2-methyl-5-(diphosphooxymethyl)pyrimidine + H(+) = thiamine phosphate + diphosphate. It functions in the pathway cofactor biosynthesis; thiamine diphosphate biosynthesis; thiamine phosphate from 4-amino-2-methyl-5-diphosphomethylpyrimidine and 4-methyl-5-(2-phosphoethyl)-thiazole: step 1/1. Its function is as follows. Condenses 4-methyl-5-(beta-hydroxyethyl)thiazole monophosphate (THZ-P) and 2-methyl-4-amino-5-hydroxymethyl pyrimidine pyrophosphate (HMP-PP) to form thiamine monophosphate (TMP). This chain is Thiamine-phosphate synthase, found in Pseudomonas putida (strain GB-1).